The primary structure comprises 484 residues: MAADNAGRWPGQPPGPPAPTHPASSVSLRWRVMLLAMSMVVISVVLMAVAVFAVTSRALYDDIDNQLRSRAQMLIESRSLDIDPGKAIEGTAYSDMNAMFYIPGRSKYTANQQGQTLPVGQPEQDVMDGTLLLSLRTVEHQRVLAIRLASGNTLLLSKSLAPTGKVLKRLGTVLLIVGGLGVAVAAIAGGMVASAGLRPVGRLTQAAERVARTDDLRPIPVIGNDELARLTETFNMMLRALAESRERQARLVTDAGHELRTPLTSLRTNVELLMESMKPGAPRIPEEDMAELRTDVIAQIEEMSTLVGDLVDLTRDDAGNAVHETVEITEVIDRSLERVRRRRNDIQFDVAVTPWQVYGDAAGLGRAVLNLLDNAAKWSPPGGRVGVGLTQIDALHAELVVSDRGPGIPPQERALVFERFFRSTSARSMPGSGLGLAIVKQVVLKHGGTLRIEDTVPGGTPPGTAMHVVLPGRPSPAGSDEAER.

Low complexity predominate over residues 1 to 10 (MAADNAGRWP). Residues 1-23 (MAADNAGRWPGQPPGPPAPTHPA) form a disordered region. Over 1–31 (MAADNAGRWPGQPPGPPAPTHPASSVSLRWR) the chain is Cytoplasmic. Residues 11 to 20 (GQPPGPPAPT) show a composition bias toward pro residues. A helical membrane pass occupies residues 32-52 (VMLLAMSMVVISVVLMAVAVF). The Extracellular portion of the chain corresponds to 53–172 (AVTSRALYDD…TGKVLKRLGT (120 aa)). Residues 173-193 (VLLIVGGLGVAVAAIAGGMVA) traverse the membrane as a helical segment. The region spanning 194–246 (SAGLRPVGRLTQAAERVARTDDLRPIPVIGNDELARLTETFNMMLRALAESRE) is the HAMP domain. The Cytoplasmic segment spans residues 194–484 (SAGLRPVGRL…SPAGSDEAER (291 aa)). Positions 254–474 (DAGHELRTPL…AMHVVLPGRP (221 aa)) constitute a Histidine kinase domain. Histidine 257 carries the phosphohistidine; by autocatalysis modification.

Mg(2+) is required as a cofactor. Requires Mn(2+) as cofactor. In terms of processing, autophosphorylated.

It localises to the cell membrane. It carries out the reaction ATP + protein L-histidine = ADP + protein N-phospho-L-histidine.. Functionally, member of the two-component regulatory system MprB/MprA which contributes to maintaining a balance among several systems involved in stress resistance and is required for establishment and maintenance of persistent infection in the host. In response to environmental signals MprB acts both as a membrane-associated protein kinase that undergoes autophosphorylation and subsequently transfers the phosphate to MprA, and a protein phosphatase that dephosphorylates phospho-MprA. This is Signal transduction histidine-protein kinase/phosphatase MprB (mprB) from Mycolicibacterium vanbaalenii (strain DSM 7251 / JCM 13017 / BCRC 16820 / KCTC 9966 / NRRL B-24157 / PYR-1) (Mycobacterium vanbaalenii).